A 255-amino-acid polypeptide reads, in one-letter code: Endonuclease 8 2 (255 aa).

Residue Pro-2 is the Schiff-base intermediate with DNA of the active site. Glu-3 (proton donor) is an active-site residue. Residue Lys-51 is the Proton donor; for beta-elimination activity of the active site. Residues Gln-67 and Asn-164 each coordinate DNA. An FPG-type zinc finger spans residues 221 to 255; sequence WVYGRAGQGCRRCGTLIAYDTTDERVRYWCPACQR. Residue Arg-245 is the Proton donor; for delta-elimination activity of the active site.

Belongs to the FPG family. The cofactor is Zn(2+).

The catalysed reaction is 2'-deoxyribonucleotide-(2'-deoxyribose 5'-phosphate)-2'-deoxyribonucleotide-DNA = a 3'-end 2'-deoxyribonucleotide-(2,3-dehydro-2,3-deoxyribose 5'-phosphate)-DNA + a 5'-end 5'-phospho-2'-deoxyribonucleoside-DNA + H(+). Involved in base excision repair of DNA damaged by oxidation or by mutagenic agents. Acts as a DNA glycosylase that recognizes and removes damaged bases. Has AP (apurinic/apyrimidinic) lyase activity and introduces nicks in the DNA strand. Cleaves the DNA backbone by beta-delta elimination to generate a single-strand break at the site of the removed base with both 3'- and 5'-phosphates. The polypeptide is Endonuclease 8 2 (nei2) (Mycobacterium bovis (strain ATCC BAA-935 / AF2122/97)).